The sequence spans 273 residues: 4-hydroxy-tetrahydrodipicolinate reductase (273 aa).

NAD(+) contacts are provided by residues 12-17 and Glu38; that span reads GAGGRM. Arg39 contacts NADP(+). NAD(+) is bound by residues 102–104 and 126–129; these read GTT and AANF. The active-site Proton donor/acceptor is His159. His160 contacts (S)-2,3,4,5-tetrahydrodipicolinate. The Proton donor role is filled by Lys163. (S)-2,3,4,5-tetrahydrodipicolinate is bound at residue 169-170; that stretch reads GT.

Belongs to the DapB family. Homotetramer.

The protein resides in the cytoplasm. It carries out the reaction (S)-2,3,4,5-tetrahydrodipicolinate + NAD(+) + H2O = (2S,4S)-4-hydroxy-2,3,4,5-tetrahydrodipicolinate + NADH + H(+). It catalyses the reaction (S)-2,3,4,5-tetrahydrodipicolinate + NADP(+) + H2O = (2S,4S)-4-hydroxy-2,3,4,5-tetrahydrodipicolinate + NADPH + H(+). The protein operates within amino-acid biosynthesis; L-lysine biosynthesis via DAP pathway; (S)-tetrahydrodipicolinate from L-aspartate: step 4/4. In terms of biological role, catalyzes the conversion of 4-hydroxy-tetrahydrodipicolinate (HTPA) to tetrahydrodipicolinate. The protein is 4-hydroxy-tetrahydrodipicolinate reductase of Pectobacterium atrosepticum (strain SCRI 1043 / ATCC BAA-672) (Erwinia carotovora subsp. atroseptica).